The chain runs to 489 residues: Putative general negative regulator of transcription C16C9.04c (489 aa).

Residues 18-61 form an RING-type zinc finger; the sequence is CPLCMEEIDISDKNFKPCQCGYRVCRFCWHHIKEDLNGRCPACR. A coiled-coil region spans residues 76–109; the sequence is AEEWKMDLHRKNERKKREKERKEVELSNRKHLAN. The region spanning 116–198 is the RRM domain; sequence NLAYVNGLSP…VSDGRHLRAS (83 aa). The segment at 199–226 adopts a C3H1-type zinc-finger fold; the sequence is YGTTKYCTSYLRNQQCPNPSCMYLHEPG. Polar residues-rich tracts occupy residues 246 to 261 and 466 to 479; these read LSTKPNVVNGATHSPS and ENQPPTSLGINNGN. Disordered stretches follow at residues 246–268 and 458–489; these read LSTKPNVVNGATHSPSPSLPFKT and VPEQEKSAENQPPTSLGINNGNPVMPPPGFQS.

It is found in the nucleus. Functionally, may negatively regulate the basal and activated transcription of many genes. The polypeptide is Putative general negative regulator of transcription C16C9.04c (Schizosaccharomyces pombe (strain 972 / ATCC 24843) (Fission yeast)).